The sequence spans 338 residues: 1-aminocyclopropane-1-carboxylate deaminase (338 aa).

Lys51 is modified (N6-(pyridoxal phosphate)lysine). Ser78 functions as the Nucleophile in the catalytic mechanism.

It belongs to the ACC deaminase/D-cysteine desulfhydrase family. Homotrimer. It depends on pyridoxal 5'-phosphate as a cofactor.

The enzyme catalyses 1-aminocyclopropane-1-carboxylate + H2O = 2-oxobutanoate + NH4(+). Functionally, catalyzes a cyclopropane ring-opening reaction, the irreversible conversion of 1-aminocyclopropane-1-carboxylate (ACC) to ammonia and alpha-ketobutyrate. Allows growth on ACC as a nitrogen source. This is 1-aminocyclopropane-1-carboxylate deaminase from Ralstonia nicotianae (strain ATCC BAA-1114 / GMI1000) (Ralstonia solanacearum).